A 267-amino-acid chain; its full sequence is Expansin-B1 (267 aa).

A signal peptide spans 1–22; it reads MASSSLLLACVVVAAMVSAVSC. Residue Asn-32 is glycosylated (N-linked (GlcNAc...) asparagine). One can recognise an Expansin-like EG45 domain in the interval 61-167; the sequence is GGACGYKDVD…RRVKCKYPAD (107 aa). Intrachain disulfides connect Cys-64–Cys-92, Cys-95–Cys-162, and Cys-100–Cys-106. Residues 181 to 262 enclose the Expansin-like CBD domain; the sequence is NYLALLVKYV…GWKADSVYKS (82 aa).

This sequence belongs to the expansin family. Expansin B subfamily. As to expression, expressed in mature anthers but not in vegetative or other floral tissues.

It localises to the secreted. Its subcellular location is the cell wall. The protein localises to the membrane. Functionally, may cause loosening and extension of plant cell walls by disrupting non-covalent bonding between cellulose microfibrils and matrix glucans. No enzymatic activity has been found. May be required for rapid internodal elongation in deepwater rice during submergence. The protein is Expansin-B1 (EXPB1a) of Oryza sativa subsp. japonica (Rice).